Consider the following 161-residue polypeptide: Probable cell wall elongation regulator TseB (161 aa).

Topologically, residues M1–A5 are cytoplasmic. Residues L6–I26 traverse the membrane as a helical segment. The Extracellular portion of the chain corresponds to Y27–P161.

In terms of assembly, interacts with the penicillin-binding protein PBP2A, a monofunctional transpeptidase.

It localises to the cell membrane. Its function is as follows. Required for normal cell shape. Plays an important role in cell wall elongation during exponential phase and spore outgrowth. Probably regulates the activity of the penicillin-binding protein PBP2A through a direct interaction. Not required for PBP2A activity, stability and localization. The protein is Probable cell wall elongation regulator TseB of Bacillus subtilis (strain 168).